The following is a 367-amino-acid chain: Phosphoribosylaminoimidazole-succinocarboxamide synthase (367 aa).

It belongs to the SAICAR synthetase family.

The enzyme catalyses 5-amino-1-(5-phospho-D-ribosyl)imidazole-4-carboxylate + L-aspartate + ATP = (2S)-2-[5-amino-1-(5-phospho-beta-D-ribosyl)imidazole-4-carboxamido]succinate + ADP + phosphate + 2 H(+). The protein operates within purine metabolism; IMP biosynthesis via de novo pathway; 5-amino-1-(5-phospho-D-ribosyl)imidazole-4-carboxamide from 5-amino-1-(5-phospho-D-ribosyl)imidazole-4-carboxylate: step 1/2. The chain is Phosphoribosylaminoimidazole-succinocarboxamide synthase from Shewanella sp. (strain MR-4).